We begin with the raw amino-acid sequence, 1201 residues long: DNA-directed RNA polymerase subunit beta' (1201 aa).

Residues Cys-60, Cys-62, Cys-75, and Cys-78 each coordinate Zn(2+). Positions 449, 451, and 453 each coordinate Mg(2+). Positions 818, 892, 899, and 902 each coordinate Zn(2+).

This sequence belongs to the RNA polymerase beta' chain family. In terms of assembly, the RNAP catalytic core consists of 2 alpha, 1 beta, 1 beta' and 1 omega subunit. When a sigma factor is associated with the core the holoenzyme is formed, which can initiate transcription. Requires Mg(2+) as cofactor. Zn(2+) is required as a cofactor.

It carries out the reaction RNA(n) + a ribonucleoside 5'-triphosphate = RNA(n+1) + diphosphate. In terms of biological role, DNA-dependent RNA polymerase catalyzes the transcription of DNA into RNA using the four ribonucleoside triphosphates as substrates. The polypeptide is DNA-directed RNA polymerase subunit beta' (Listeria welshimeri serovar 6b (strain ATCC 35897 / DSM 20650 / CCUG 15529 / CIP 8149 / NCTC 11857 / SLCC 5334 / V8)).